A 378-amino-acid chain; its full sequence is Acetylornithine deacetylase (378 aa).

A Zn(2+)-binding site is contributed by His76. Asp78 is a catalytic residue. Zn(2+) is bound at residue Asp108. Residue Glu140 is part of the active site. Glu141, Glu165, and His351 together coordinate Zn(2+).

It belongs to the peptidase M20A family. ArgE subfamily. As to quaternary structure, homodimer. Requires Zn(2+) as cofactor. Co(2+) is required as a cofactor. Glutathione serves as cofactor.

It is found in the cytoplasm. It catalyses the reaction N(2)-acetyl-L-ornithine + H2O = L-ornithine + acetate. Its pathway is amino-acid biosynthesis; L-arginine biosynthesis; L-ornithine from N(2)-acetyl-L-ornithine (linear): step 1/1. Catalyzes the hydrolysis of the amide bond of N(2)-acetylated L-amino acids. Cleaves the acetyl group from N-acetyl-L-ornithine to form L-ornithine, an intermediate in L-arginine biosynthesis pathway, and a branchpoint in the synthesis of polyamines. This Vibrio parahaemolyticus serotype O3:K6 (strain RIMD 2210633) protein is Acetylornithine deacetylase.